The primary structure comprises 652 residues: tRNA-guanine(15) transglycosylase (652 aa).

The active-site Nucleophile is Asp-88. Substrate is bound by residues Asp-123 and Ala-194. Cys-280, Cys-282, and Cys-285 together coordinate Zn(2+). One can recognise a PUA domain in the interval 577–652 (KYRVVIDSEV…AAVSVRSGFK (76 aa)).

The protein belongs to the archaeosine tRNA-ribosyltransferase family. It depends on Zn(2+) as a cofactor.

It catalyses the reaction guanosine(15) in tRNA + 7-cyano-7-deazaguanine = 7-cyano-7-carbaguanosine(15) in tRNA + guanine. The protein operates within tRNA modification; archaeosine-tRNA biosynthesis. Its function is as follows. Exchanges the guanine residue with 7-cyano-7-deazaguanine (preQ0) at position 15 in the dihydrouridine loop (D-loop) of archaeal tRNAs. The sequence is that of tRNA-guanine(15) transglycosylase from Methanococcus aeolicus (strain ATCC BAA-1280 / DSM 17508 / OCM 812 / Nankai-3).